We begin with the raw amino-acid sequence, 169 residues long: CKLF-like MARVEL transmembrane domain-containing protein 1 (169 aa).

The 119-residue stretch at 17-135 (NLKQPETAAA…DAFVVTTKMR (119 aa)) folds into the MARVEL domain. Helical transmembrane passes span 22 to 42 (ETAAALSLILGALACFIITQA), 46 to 66 (FITITSLEICIVVFFILIYVL), 79 to 99 (LLDLTNSIITAVFLSVVAILA), and 110 to 130 (YVGGSLCLTAVIVCCIDAFVV).

It belongs to the chemokine-like factor family. In terms of tissue distribution, highly expressed in testis.

It is found in the membrane. In Homo sapiens (Human), this protein is CKLF-like MARVEL transmembrane domain-containing protein 1 (CMTM1).